The chain runs to 360 residues: MLVWFAEYLLKYNTAFNVVSYISFRSIMALLTAMAIGLWIGPKVINRLQILKFGQEVRNDGPESHFKKRGTPTMGGIMILVSIGVSSLLWADLRNPYVWFTLFVLFGYGIVGFVDDYWKIARKNTDGLVARWKYFWLSFIAFIAAFSMYAMGKDTAATQLVVPFFKEVMPQLGLFYIILAYFVIVGTSNAVNLTDGLDGLAIVPTIMVTAAFALIAWATGNIHAAEYLYIPYIRHSGELAIMCTAIVGAGLGFLWYNTYPAQVFMGDVGSLSLGGALGVIAVLVRQELLLLVMGGVFVVEALSVILQVGSYKLRQKRIFRMAPIHHHFELKGWPEPRVIVRFWIITLVLVLVGLVTLKLR.

10 consecutive transmembrane segments (helical) span residues 26 to 46 (SIMA…KVIN), 73 to 93 (TMGG…WADL), 98 to 118 (VWFT…DDYW), 132 to 152 (WKYF…YAMG), 168 to 188 (VMPQ…VGTS), 199 to 219 (GLAI…AWAT), 236 to 256 (SGEL…FLWY), 263 to 283 (VFMG…IAVL), 288 to 308 (LLLL…ILQV), and 338 to 358 (VIVR…VTLK).

It belongs to the glycosyltransferase 4 family. MraY subfamily. The cofactor is Mg(2+).

Its subcellular location is the cell inner membrane. The enzyme catalyses UDP-N-acetyl-alpha-D-muramoyl-L-alanyl-gamma-D-glutamyl-meso-2,6-diaminopimeloyl-D-alanyl-D-alanine + di-trans,octa-cis-undecaprenyl phosphate = di-trans,octa-cis-undecaprenyl diphospho-N-acetyl-alpha-D-muramoyl-L-alanyl-D-glutamyl-meso-2,6-diaminopimeloyl-D-alanyl-D-alanine + UMP. The protein operates within cell wall biogenesis; peptidoglycan biosynthesis. Functionally, catalyzes the initial step of the lipid cycle reactions in the biosynthesis of the cell wall peptidoglycan: transfers peptidoglycan precursor phospho-MurNAc-pentapeptide from UDP-MurNAc-pentapeptide onto the lipid carrier undecaprenyl phosphate, yielding undecaprenyl-pyrophosphoryl-MurNAc-pentapeptide, known as lipid I. In Haemophilus ducreyi (strain 35000HP / ATCC 700724), this protein is Phospho-N-acetylmuramoyl-pentapeptide-transferase.